Consider the following 273-residue polypeptide: MNKYFTCYVVASLFLSGCTVQHNLINETPSQIVQGHNQVIHQYFDEKNTSGVLVIQTDKKINLYGNALSRANTEYVPASTFKMLNALIGLENQKTDINEIFKWKGEKRSFTAWEKDMTLGEAMKLSAVPVYQELARRIGLDLMQKEVKRIGFGNAEIGQQVDNFWLVGPLKVTPIQEVEFVSQLAHTQLPFSEKVQANVKNMLLLEESNGYKIFGKTGWAMDIKPQVGWLTGWVEQPDGKIVAFALNMEMRSEMPASIRNELLMKSLKQLNII.

An N-terminal signal peptide occupies residues 1–17 (MNKYFTCYVVASLFLSG). Residue serine 79 is the Acyl-ester intermediate of the active site. A beta-lactam-binding residues include serine 79, lysine 82, serine 126, threonine 217, tryptophan 219, and arginine 259. Position 82 is an N6-carboxylysine (lysine 82).

Belongs to the class-D beta-lactamase family. In terms of assembly, monomer. Post-translationally, carboxylated on the epsilon-amino group of a lysine, with the resulting carbamate functional group serving as a general base. Probably N-carboxylated at Lys-82 at neutral pH in vivo and undergoes complete N-decarboxylation, at pH 4.1, in vitro.

It localises to the periplasm. It catalyses the reaction a beta-lactam + H2O = a substituted beta-amino acid. Inhibited by the desmethyl carbapenem, MA-1-206, via a covalent binding to Ser-79. Functionally, class D beta-lactamase which confers resistance to the beta-lactam antibiotics, including ampicillin, and carbapenems such as imipenem and meropenem. Acts via hydrolysis of the beta-lactam ring. Has penicillin-, cephalosporin- and carbapenem-hydrolyzing activities, but lacks ceftazidime-hydrolyzing activity. This is Beta-lactamase OXA-23 from Acinetobacter baumannii.